Reading from the N-terminus, the 442-residue chain is GTPase Obg (442 aa).

Residues 1-158 (MFYDQARIFV…HWLELELKLL (158 aa)) form the Obg domain. An OBG-type G domain is found at 159 to 329 (ADVGLVGFPN…LIYHVHKGLE (171 aa)). Residues 165–172 (GFPNVGKS), 190–194 (FTTLE), 212–215 (DIPG), 282–285 (NKMD), and 310–312 (SAA) each bind GTP. Mg(2+)-binding residues include S172 and T192. The region spanning 349–427 (FTGKTEERFK…IGDLDFDFIE (79 aa)) is the OCT domain.

The protein belongs to the TRAFAC class OBG-HflX-like GTPase superfamily. OBG GTPase family. Monomer. The cofactor is Mg(2+).

It is found in the cytoplasm. In terms of biological role, an essential GTPase which binds GTP, GDP and possibly (p)ppGpp with moderate affinity, with high nucleotide exchange rates and a fairly low GTP hydrolysis rate. Plays a role in control of the cell cycle, stress response, ribosome biogenesis and in those bacteria that undergo differentiation, in morphogenesis control. The sequence is that of GTPase Obg from Heliobacterium modesticaldum (strain ATCC 51547 / Ice1).